We begin with the raw amino-acid sequence, 130 residues long: ATP synthase epsilon chain, chloroplastic (130 aa).

It belongs to the ATPase epsilon chain family. F-type ATPases have 2 components, CF(1) - the catalytic core - and CF(0) - the membrane proton channel. CF(1) has five subunits: alpha(3), beta(3), gamma(1), delta(1), epsilon(1). CF(0) has three main subunits: a, b and c.

The protein resides in the plastid. It localises to the chloroplast thylakoid membrane. Produces ATP from ADP in the presence of a proton gradient across the membrane. In Tupiella akineta (Green alga), this protein is ATP synthase epsilon chain, chloroplastic.